We begin with the raw amino-acid sequence, 275 residues long: Putative carbamate hydrolase RutD (275 aa).

One can recognise an AB hydrolase-1 domain in the interval 15 to 116 (TVVLSSGLGG…SLVVINGWTV (102 aa)).

This sequence belongs to the AB hydrolase superfamily. Hydrolase RutD family.

The catalysed reaction is carbamate + 2 H(+) = NH4(+) + CO2. In terms of biological role, involved in pyrimidine catabolism. May facilitate the hydrolysis of carbamate, a reaction that can also occur spontaneously. The chain is Putative carbamate hydrolase RutD from Pantoea ananatis (strain LMG 20103).